Reading from the N-terminus, the 418-residue chain is Tubulin alpha chain (418 aa).

Residues Q11, E71, S140, G144, T179, N206, and N228 each coordinate GTP. E71 contributes to the Mg(2+) binding site. Residue E255 is part of the active site.

This sequence belongs to the tubulin family. As to quaternary structure, dimer of alpha and beta chains. A typical microtubule is a hollow water-filled tube with an outer diameter of 25 nm and an inner diameter of 15 nM. Alpha-beta heterodimers associate head-to-tail to form protofilaments running lengthwise along the microtubule wall with the beta-tubulin subunit facing the microtubule plus end conferring a structural polarity. Microtubules usually have 13 protofilaments but different protofilament numbers can be found in some organisms and specialized cells. The cofactor is Mg(2+).

The protein resides in the cytoplasm. Its subcellular location is the cytoskeleton. It carries out the reaction GTP + H2O = GDP + phosphate + H(+). In terms of biological role, tubulin is the major constituent of microtubules, a cylinder consisting of laterally associated linear protofilaments composed of alpha- and beta-tubulin heterodimers. Microtubules grow by the addition of GTP-tubulin dimers to the microtubule end, where a stabilizing cap forms. Below the cap, tubulin dimers are in GDP-bound state, owing to GTPase activity of alpha-tubulin. The chain is Tubulin alpha chain (TUB1) from Ajellomyces capsulatus (Darling's disease fungus).